A 74-amino-acid polypeptide reads, in one-letter code: U4-theraphotoxin-Cg1a (74 aa).

The N-terminal stretch at Met1–Ala19 is a signal peptide. The propeptide occupies Ala20 to Arg39. 3 disulfide bridges follow: Cys42-Cys56, Cys49-Cys61, and Cys55-Cys71.

This sequence belongs to the neurotoxin 36 family. 01 subfamily. In terms of tissue distribution, expressed by the venom gland.

The protein localises to the secreted. In terms of biological role, probable ion channel inhibitor. This is U4-theraphotoxin-Cg1a from Chilobrachys guangxiensis (Chinese earth tiger tarantula).